The following is a 54-amino-acid chain: Relaxin (54 aa).

Glutamine 1 is modified (pyrrolidone carboxylic acid). 3 disulfide bridges follow: cysteine 10–cysteine 41, cysteine 22–cysteine 54, and cysteine 40–cysteine 45.

The protein belongs to the insulin family. Heterodimer of a B chain and an A chain linked by two disulfide bonds.

It is found in the secreted. In terms of biological role, relaxin is an ovarian hormone that acts with estrogen to produce dilatation of the birth canal in many mammals. This Balaenoptera edeni (Pigmy Bryde's whale) protein is Relaxin.